The sequence spans 155 residues: Riboflavin kinase (155 aa).

Positions 15, 21, 27, and 29 each coordinate ATP. Residues Thr27 and Asn29 each coordinate Mg(2+). The active-site Nucleophile is Glu79. Positions 82, 84, and 91 each coordinate ATP. FMN-binding residues include Arg104, Lys107, and Phe109.

Monomer. Directly interacts with TNFRSF1A death domain; this interaction may be supported by TRADD. In the absence of TNFRSF1A, interacts with TRADD. Independently of TNFRSF1A, interacts with the NADPH oxidase subunit CYBA. The cofactor is Zn(2+). Mg(2+) is required as a cofactor.

It is found in the cytoplasm. The catalysed reaction is riboflavin + ATP = FMN + ADP + H(+). The protein operates within cofactor biosynthesis; FMN biosynthesis; FMN from riboflavin (ATP route): step 1/1. Its function is as follows. Catalyzes the phosphorylation of riboflavin (vitamin B2) to form flavin-mononucleotide (FMN), hence rate-limiting enzyme in the synthesis of FAD. Essential for TNF-induced reactive oxygen species (ROS) production. Through its interaction with both TNFRSF1A and CYBA, physically and functionally couples TNFRSF1A to NADPH oxidase. TNF-activation of RFK may enhance the incorporation of FAD in NADPH oxidase, a critical step for the assembly and activation of NADPH oxidase. In Mus musculus (Mouse), this protein is Riboflavin kinase (Rfk).